The following is a 166-amino-acid chain: uncharacterized protein (166 aa).

3 consecutive Pentapeptide repeat domains span residues 38–77 (GECL…NLRR), 78–117 (ALLD…NLER), and 118–157 (SFLR…EFWE).

This is an uncharacterized protein from Synechocystis sp. (strain ATCC 27184 / PCC 6803 / Kazusa).